Here is a 190-residue protein sequence, read N- to C-terminus: Peptidyl-tRNA hydrolase (190 aa).

TRNA is bound at residue Y14. H19 serves as the catalytic Proton acceptor. 3 residues coordinate tRNA: Y64, N66, and N113.

The protein belongs to the PTH family. Monomer.

It localises to the cytoplasm. The catalysed reaction is an N-acyl-L-alpha-aminoacyl-tRNA + H2O = an N-acyl-L-amino acid + a tRNA + H(+). Its function is as follows. Hydrolyzes ribosome-free peptidyl-tRNAs (with 1 or more amino acids incorporated), which drop off the ribosome during protein synthesis, or as a result of ribosome stalling. In terms of biological role, catalyzes the release of premature peptidyl moieties from peptidyl-tRNA molecules trapped in stalled 50S ribosomal subunits, and thus maintains levels of free tRNAs and 50S ribosomes. In Gemmatimonas aurantiaca (strain DSM 14586 / JCM 11422 / NBRC 100505 / T-27), this protein is Peptidyl-tRNA hydrolase.